The chain runs to 547 residues: Glucose-6-phosphate isomerase (547 aa).

The Proton donor role is filled by Glu-353. Residues His-384 and Lys-512 contribute to the active site.

This sequence belongs to the GPI family.

The protein resides in the cytoplasm. It catalyses the reaction alpha-D-glucose 6-phosphate = beta-D-fructose 6-phosphate. It functions in the pathway carbohydrate biosynthesis; gluconeogenesis. It participates in carbohydrate degradation; glycolysis; D-glyceraldehyde 3-phosphate and glycerone phosphate from D-glucose: step 2/4. Its function is as follows. Catalyzes the reversible isomerization of glucose-6-phosphate to fructose-6-phosphate. The polypeptide is Glucose-6-phosphate isomerase (Glaesserella parasuis serovar 5 (strain SH0165) (Haemophilus parasuis)).